The following is a 363-amino-acid chain: Protein-arginine kinase (363 aa).

The region spanning 24-254 (IVLSSRIRLA…AQLIEQERSA (231 aa)) is the Phosphagen kinase C-terminal domain. ATP is bound by residues 27-31 (SSRIR), His-92, Arg-125, 176-180 (RASVM), and 207-212 (RGIYGE). Positions 337–342 (RDIKRA) match the RDXXRA motif of the pArg binding pocket involved in allosteric regulation motif.

Belongs to the ATP:guanido phosphotransferase family.

The enzyme catalyses L-arginyl-[protein] + ATP = N(omega)-phospho-L-arginyl-[protein] + ADP + H(+). With respect to regulation, appears to be allosterically activated by the binding of pArg-containing polypeptides to the pArg-binding pocket localized in the C-terminal domain of McsB. Its function is as follows. Catalyzes the specific phosphorylation of arginine residues in a large number of proteins. Is part of the bacterial stress response system. Protein arginine phosphorylation has a physiologically important role and is involved in the regulation of many critical cellular processes, such as protein homeostasis, motility, competence, and stringent and stress responses, by regulating gene expression and protein activity. The polypeptide is Protein-arginine kinase (Bacillus pumilus (strain SAFR-032)).